The following is a 310-amino-acid chain: Quinolinate synthase (310 aa).

2 residues coordinate iminosuccinate: histidine 27 and serine 44. Cysteine 89 contacts [4Fe-4S] cluster. Iminosuccinate contacts are provided by residues 115–117 and serine 132; that span reads YVN. Cysteine 175 is a [4Fe-4S] cluster binding site. Residues 201 to 203 and threonine 222 contribute to the iminosuccinate site; that span reads HPE. Residue cysteine 267 participates in [4Fe-4S] cluster binding.

The protein belongs to the quinolinate synthase family. Type 2 subfamily. [4Fe-4S] cluster serves as cofactor.

The protein localises to the cytoplasm. The catalysed reaction is iminosuccinate + dihydroxyacetone phosphate = quinolinate + phosphate + 2 H2O + H(+). Its pathway is cofactor biosynthesis; NAD(+) biosynthesis; quinolinate from iminoaspartate: step 1/1. Catalyzes the condensation of iminoaspartate with dihydroxyacetone phosphate to form quinolinate. This is Quinolinate synthase from Thermus thermophilus (strain ATCC BAA-163 / DSM 7039 / HB27).